Here is a 207-residue protein sequence, read N- to C-terminus: MIGLISGQVQYLMAPTACVMTTSGIGYDIELPLPSFCQLRLNEQASIWTHFHVREDAQLLYGFIDRKERDVFRQLIKINGVGAKMALAMLSAMSAAELKMHVEQESETALTRIPGIGKKTAQRLLIELKDKLKNIEVDNSNLEFAIQPAPISAEDSIIAEVEGALMSLGYKEKEAQQAIKAAKSNGETFADTQSLLKATLQQFQSFK.

The tract at residues 1 to 64 (MIGLISGQVQ…EDAQLLYGFI (64 aa)) is domain I. Positions 65–143 (DRKERDVFRQ…NIEVDNSNLE (79 aa)) are domain II. Residues 144-152 (FAIQPAPIS) are flexible linker. The interval 153–207 (AEDSIIAEVEGALMSLGYKEKEAQQAIKAAKSNGETFADTQSLLKATLQQFQSFK) is domain III.

This sequence belongs to the RuvA family. In terms of assembly, homotetramer. Forms an RuvA(8)-RuvB(12)-Holliday junction (HJ) complex. HJ DNA is sandwiched between 2 RuvA tetramers; dsDNA enters through RuvA and exits via RuvB. An RuvB hexamer assembles on each DNA strand where it exits the tetramer. Each RuvB hexamer is contacted by two RuvA subunits (via domain III) on 2 adjacent RuvB subunits; this complex drives branch migration. In the full resolvosome a probable DNA-RuvA(4)-RuvB(12)-RuvC(2) complex forms which resolves the HJ.

It localises to the cytoplasm. The RuvA-RuvB-RuvC complex processes Holliday junction (HJ) DNA during genetic recombination and DNA repair, while the RuvA-RuvB complex plays an important role in the rescue of blocked DNA replication forks via replication fork reversal (RFR). RuvA specifically binds to HJ cruciform DNA, conferring on it an open structure. The RuvB hexamer acts as an ATP-dependent pump, pulling dsDNA into and through the RuvAB complex. HJ branch migration allows RuvC to scan DNA until it finds its consensus sequence, where it cleaves and resolves the cruciform DNA. In Psychrobacter arcticus (strain DSM 17307 / VKM B-2377 / 273-4), this protein is Holliday junction branch migration complex subunit RuvA.